The sequence spans 393 residues: Zinc finger CCCH domain-containing protein 2 (393 aa).

The disordered stretch occupies residues 1-71 (MDVVCTEHQM…NRENKEYCYD (71 aa)). The span at 20–37 (RKLLLSSKSFPSDSSSPR) shows a compositional bias: low complexity. Positions 60–69 (DNNRENKEYC) are enriched in basic and acidic residues. 2 C3H1-type zinc fingers span residues 122–150 (QYSGEVCPEFRRGGDCSRGDDCEFAHGVF) and 159–181 (YRTEACKDGKHCKRKVCFFAHSP).

Interacts with MARD1/FLZ9 and RD21A. In terms of tissue distribution, specifically expressed in seeds.

Its subcellular location is the nucleus. Its function is as follows. Probable transcription repressor that functions as a negative regulator of phytochrome-mediated promotion of seed germination. Inhibits seed germination by regulating the expression of gibberellic acid (GA) and abscisic acid (ABA) metabolic genes. Does not regulate the expression of the DELLA genes RGA and RGA1. Activated by PIL5, a phytochrome-interacting basic helix-loop-helix transcription factor. Represses directly JMJ20 and JMJ22 expression in the absence of red light (R) and in far-red (FR) conditions. This Arabidopsis thaliana (Mouse-ear cress) protein is Zinc finger CCCH domain-containing protein 2.